Consider the following 341-residue polypeptide: Phenylalanine--tRNA ligase alpha subunit (341 aa).

A Mg(2+)-binding site is contributed by E256.

It belongs to the class-II aminoacyl-tRNA synthetase family. Phe-tRNA synthetase alpha subunit type 1 subfamily. Tetramer of two alpha and two beta subunits. Mg(2+) is required as a cofactor.

The protein resides in the cytoplasm. The enzyme catalyses tRNA(Phe) + L-phenylalanine + ATP = L-phenylalanyl-tRNA(Phe) + AMP + diphosphate + H(+). This chain is Phenylalanine--tRNA ligase alpha subunit (pheS), found in Chlamydia muridarum (strain MoPn / Nigg).